Here is a 207-residue protein sequence, read N- to C-terminus: MQKSWRNIAIALAGMTQCARQVEELAKTGYLKTEVFETAVKSLINTDPSSAEDVFGGLDAVQPGLSTLKDILEDHRSPGNADILRYVLGAVVLQKRLARRKDVLYIIGNRLEKVSQQVEHFGCSHDNVVSNIADIYTDTISKFPYRIQVTGEFNYLQQERVAAQIRSLLFAAIRAATLWRQAGGTRWHMLFYRSKMLAATEQLLQRA.

Belongs to the HflD family.

It is found in the cytoplasm. It localises to the cell inner membrane. The protein is High frequency lysogenization protein HflD homolog of Teredinibacter turnerae (strain ATCC 39867 / T7901).